We begin with the raw amino-acid sequence, 356 residues long: Putative [LysW]-L-2-aminoadipate/[LysW]-L-glutamate phosphate reductase (356 aa).

Residue 11–14 coordinates NADP(+); the sequence is SGYT. The active site involves C157. N323 is a binding site for NADP(+).

It belongs to the NAGSA dehydrogenase family. Type 1 subfamily. LysY sub-subfamily.

The protein resides in the cytoplasm. It carries out the reaction [amino-group carrier protein]-C-terminal-N-(1-carboxy-5-oxopentan-1-yl)-L-glutamine + phosphate + NADP(+) = [amino-group carrier protein]-C-terminal-N-(1-carboxy-5-phosphooxy-5-oxopentan-1-yl)-L-glutamine + NADPH + H(+). It catalyses the reaction [amino-group carrier protein]-C-terminal-gamma-(L-glutamyl-5-semialdehyde)-L-glutamate + phosphate + NADP(+) = [amino-group carrier protein]-C-terminal-gamma-(5-phospho-L-glutamyl)-L-glutamate + NADPH + H(+). Its pathway is amino-acid biosynthesis; L-lysine biosynthesis via AAA pathway; L-lysine from L-alpha-aminoadipate (Thermus route): step 3/5. It functions in the pathway amino-acid biosynthesis; L-arginine biosynthesis. Functionally, involved in both the arginine and lysine biosynthetic pathways. This Ignicoccus hospitalis (strain KIN4/I / DSM 18386 / JCM 14125) protein is Putative [LysW]-L-2-aminoadipate/[LysW]-L-glutamate phosphate reductase.